A 2715-amino-acid chain; its full sequence is Chromodomain-helicase-DNA-binding protein 6 (2715 aa).

Over residues M1–Q11 the composition is skewed to basic and acidic residues. 2 disordered regions span residues M1–F30 and E66–R244. Residues M1–H747 form a required for DNA-dependent ATPase activity region. The span at L12 to S27 shows a compositional bias: polar residues. Residues E123–C172 show a composition bias toward basic and acidic residues. 2 Chromo domains span residues N292 to R343 and V375 to E439. The Helicase ATP-binding domain maps to L473–S647. D486–T493 is an ATP binding site. The DEAH box motif lies at D598 to H601. Positions L787 to L956 constitute a Helicase C-terminal domain. A disordered region spans residues K1318–V1390. Residues S1321–T1330 are compositionally biased toward polar residues. Composition is skewed to basic and acidic residues over residues I1333–G1351 and F1367–A1376. The Myb-like domain occupies R1449–V1503. Positions F2027–N2038 are enriched in basic and acidic residues. 6 disordered regions span residues F2027–D2063, S2116–H2148, Q2321–K2351, P2373–E2422, T2547–T2602, and V2648–N2715. A compositionally biased stretch (polar residues) spans S2116–S2141. Residues P2329–S2346 are compositionally biased toward low complexity. Residues T2547–S2560 show a composition bias toward low complexity. Basic and acidic residues-rich tracts occupy residues K2567 to P2588 and A2706 to N2715.

Belongs to the SNF2/RAD54 helicase family. Interacts with NFE2L2; involved in activation of the transcription. As to quaternary structure, (Microbial infection) Interacts with the influenza A polymerase complex composed fo PB1, PB2 and PA. In terms of assembly, (Microbial infection) Interacts (via N-terminus) with human papillomavirus protein E8^E2C (via C-terminus); this interaction induces transcriptional repression of the viral genome. In terms of tissue distribution, widely expressed.

The protein resides in the nucleus. The protein localises to the nucleoplasm. It catalyses the reaction ATP + H2O = ADP + phosphate + H(+). Its function is as follows. ATP-dependent chromatin-remodeling factor. Regulates transcription by disrupting nucleosomes in a largely non-sliding manner which strongly increases the accessibility of chromatin; nucleosome disruption requires ATP. Activates transcription of specific genes in response to oxidative stress through interaction with NFE2L2. Functionally, (Microbial infection) Acts as a transcriptional repressor of different viruses including influenza virus or papillomavirus. During influenza virus infection, the viral polymerase complex localizes CHD6 to inactive chromatin where it gets degraded in a proteasome independent-manner. This is Chromodomain-helicase-DNA-binding protein 6 (CHD6) from Homo sapiens (Human).